We begin with the raw amino-acid sequence, 367 residues long: MSIDTVHVDLGARSYDVRIGQGLLARAGEEIVALAGPRRVAILTDETVAALHLPALRESLAGQGIEAPALALPAGEATKCWAELGRAVEWLLAQRIERKDLVIALGGGVIGDLAGFAAAILRRGVRFVQIPTTLLAQVDSSVGGKTGINSPQGKNLIGAFHQPALVLADIDVLTTLSPRDFRAGYGEVAKYGLLGDEGFFEWLEANAAGLASDPALRQRAVRHSVEMKAGIVQRDETEQGERALLNLGHTFGHALESATGYSDRLLHGEGVAIGCALAFELSAKMGLCSQEAPSRVAAHLAAMGMPARIADIPGDLPDDEALIGLMAQDKKVQDGRLRFVLAHGIGRAFVTDAVDPALLRQVLAQSR.

Residues 108–112, 132–133, Lys145, and Lys154 contribute to the NAD(+) site; these read GVIGD and TT. Positions 187, 249, and 267 each coordinate Zn(2+).

It belongs to the sugar phosphate cyclases superfamily. Dehydroquinate synthase family. Co(2+) serves as cofactor. Requires Zn(2+) as cofactor. NAD(+) is required as a cofactor.

Its subcellular location is the cytoplasm. It carries out the reaction 7-phospho-2-dehydro-3-deoxy-D-arabino-heptonate = 3-dehydroquinate + phosphate. Its pathway is metabolic intermediate biosynthesis; chorismate biosynthesis; chorismate from D-erythrose 4-phosphate and phosphoenolpyruvate: step 2/7. Catalyzes the conversion of 3-deoxy-D-arabino-heptulosonate 7-phosphate (DAHP) to dehydroquinate (DHQ). This Paracoccus denitrificans (strain Pd 1222) protein is 3-dehydroquinate synthase.